A 473-amino-acid polypeptide reads, in one-letter code: Lipid A galacturonosyltransferase RgtD (473 aa).

The next 10 membrane-spanning stretches (helical) occupy residues 6 to 26 (GLLI…FDAT), 68 to 88 (AIYW…LVLM), 94 to 114 (FVGP…PGVA), 118 to 138 (VFFS…LAYF), 160 to 180 (FLTK…LLLI), 190 to 210 (VIIA…WNLQ), 238 to 258 (FFAA…LWAV), 271 to 291 (KMLV…ATVA), 295 to 315 (ANWA…LLYL), and 327 to 347 (INGI…QLLL).

It localises to the cell membrane. The protein operates within bacterial outer membrane biogenesis; LPS lipid A biosynthesis. Involved in the modification of the lipopolysaccharide (LPS) lipid A moiety. Catalyzes the transfer of a galacturonic acid (GalA) residue to the 4'-position of 4'-dephosphorylated lipid A, using dodecaprenyl phosphate-GalA as the donor substrate. Acts before the other GalA transferases RgtA, RgtB and RgtC. This chain is Lipid A galacturonosyltransferase RgtD, found in Rhizobium johnstonii (strain DSM 114642 / LMG 32736 / 3841) (Rhizobium leguminosarum bv. viciae).